A 124-amino-acid chain; its full sequence is Fluoride-specific ion channel FluC (124 aa).

Helical transmembrane passes span L5–F25, F32–G52, L61–V81, and L94–V114. Na(+) is bound by residues G69 and T72.

The protein belongs to the fluoride channel Fluc/FEX (TC 1.A.43) family.

The protein localises to the cell inner membrane. The catalysed reaction is fluoride(in) = fluoride(out). With respect to regulation, na(+) is not transported, but it plays an essential structural role and its presence is essential for fluoride channel function. Functionally, fluoride-specific ion channel. Important for reducing fluoride concentration in the cell, thus reducing its toxicity. The chain is Fluoride-specific ion channel FluC from Haemophilus ducreyi (strain 35000HP / ATCC 700724).